A 248-amino-acid polypeptide reads, in one-letter code: Triosephosphate isomerase (248 aa).

Residues N10 and K12 each coordinate substrate. The Electrophile role is filled by H95. The active-site Proton acceptor is E165.

This sequence belongs to the triosephosphate isomerase family. Homodimer.

It localises to the cytoplasm. It catalyses the reaction D-glyceraldehyde 3-phosphate = dihydroxyacetone phosphate. It functions in the pathway carbohydrate biosynthesis; gluconeogenesis. It participates in carbohydrate degradation; glycolysis; D-glyceraldehyde 3-phosphate from glycerone phosphate: step 1/1. This Candida albicans (strain SC5314 / ATCC MYA-2876) (Yeast) protein is Triosephosphate isomerase (TPI1).